The following is a 99-amino-acid chain: MARKSLIQREKKRQALERKYHLIRQSLEEKSKVSSLDDKWEIHRKLQSSPRNSAPTRLHRRCSSTGRPRANYRDFGLSGHILREMAHACLLPGIKKSSW.

Residues 46–66 (LQSSPRNSAPTRLHRRCSSTG) form a disordered region.

The protein belongs to the universal ribosomal protein uS14 family. Part of the 30S ribosomal subunit.

Its subcellular location is the plastid. The protein resides in the chloroplast. Binds 16S rRNA, required for the assembly of 30S particles. The polypeptide is Small ribosomal subunit protein uS14c (Pinus thunbergii (Japanese black pine)).